Reading from the N-terminus, the 366-residue chain is Glutamate 5-kinase (366 aa).

An ATP-binding site is contributed by lysine 17. Positions 57, 144, and 156 each coordinate substrate. Residues 176–177 (SD) and 216–222 (TGGMVSK) contribute to the ATP site. One can recognise a PUA domain in the interval 278–356 (SGALTLDDGA…SDLPAEMRRP (79 aa)).

Belongs to the glutamate 5-kinase family.

It is found in the cytoplasm. It carries out the reaction L-glutamate + ATP = L-glutamyl 5-phosphate + ADP. The protein operates within amino-acid biosynthesis; L-proline biosynthesis; L-glutamate 5-semialdehyde from L-glutamate: step 1/2. Its function is as follows. Catalyzes the transfer of a phosphate group to glutamate to form L-glutamate 5-phosphate. The chain is Glutamate 5-kinase from Mycolicibacterium vanbaalenii (strain DSM 7251 / JCM 13017 / BCRC 16820 / KCTC 9966 / NRRL B-24157 / PYR-1) (Mycobacterium vanbaalenii).